The primary structure comprises 790 residues: Kinesin-like protein KIF9 (790 aa).

The region spanning 6–340 (KVQAFVRVRP…LRFASRMKLV (335 aa)) is the Kinesin motor domain. Residues 12-14 (RVR) and 93-100 (GQTGAGKT) contribute to the ATP site. A coiled-coil region spans residues 342 to 442 (TEPAINEKYD…EQEVESALRR (101 aa)). The tract at residues 482 to 521 (GVAPFSVKPGKKPKTKKTPKDQFSSSARKEGASSPVSGKD) is disordered. A Phosphothreonine modification is found at Thr530. The segment at 547-577 (RERETSSIEPLISDSPKEELRAPRPSTPPSR) is disordered. Residues 600-695 (KSILNERKKR…YCQRLVDQCR (96 aa)) adopt a coiled-coil conformation.

The protein belongs to the TRAFAC class myosin-kinesin ATPase superfamily. Kinesin family. Interacts with HYDIN. In terms of tissue distribution, highly expressed in the testis (at protein level). Weakly expressed in the brain, thymus, lung and heart.

It localises to the cytoplasm. The protein localises to the cytoskeleton. The protein resides in the cell projection. Its subcellular location is the cilium. It is found in the flagellum. It localises to the flagellum axoneme. Its function is as follows. Essential for normal male fertility and for progressive motility of spermatozoa. The chain is Kinesin-like protein KIF9 (Kif9) from Mus musculus (Mouse).